The chain runs to 91 residues: UPF0250 protein PputGB1_4855 (91 aa).

This sequence belongs to the UPF0250 family.

This chain is UPF0250 protein PputGB1_4855, found in Pseudomonas putida (strain GB-1).